The chain runs to 60 residues: Colanic acid capsular biosynthesis activation protein B (60 aa).

The protein is Colanic acid capsular biosynthesis activation protein B (rcsB) of Klebsiella aerogenes (Enterobacter aerogenes).